We begin with the raw amino-acid sequence, 155 residues long: Endoribonuclease YbeY (155 aa).

Zn(2+)-binding residues include histidine 114, histidine 118, and histidine 124.

Belongs to the endoribonuclease YbeY family. Requires Zn(2+) as cofactor.

The protein localises to the cytoplasm. Functionally, single strand-specific metallo-endoribonuclease involved in late-stage 70S ribosome quality control and in maturation of the 3' terminus of the 16S rRNA. The sequence is that of Endoribonuclease YbeY from Shigella flexneri serotype 5b (strain 8401).